The following is a 1060-amino-acid chain: Histone lysine demethylase PHF8 (1060 aa).

The PHD-type zinc-finger motif lies at 41–92; sequence PVYCLCRLPYDVTRFMIECDMCQDWFHGSCVGVEEEKAADIDLYHCPNCEVL. Position 69 is a phosphoserine; by CDK1 (S69). The segment at 100–120 is disordered; that stretch reads KRRGSSKGHDTHKGKPVKTGS. The linker stretch occupies residues 101-115; the sequence is RRGSSKGHDTHKGKP. S120 carries the phosphoserine; by CDK1 modification. A JmjC domain is found at 231–387; the sequence is FSDTRLSNLV…MQLKAYEIEK (157 aa). Position 280 (T280) interacts with substrate. Fe cation-binding residues include H283 and D285. K300 is a substrate binding site. Fe cation is bound at residue H355. Polar residues predominate over residues 508–517; the sequence is AHSTSVSMSR. The disordered stretch occupies residues 508 to 534; the sequence is AHSTSVSMSRLSLPSKNGSKKKGLKPK. S651 bears the Phosphoserine mark. At Y704 the chain carries Phosphotyrosine. Phosphothreonine occurs at positions 705 and 706. S722 carries the phosphoserine modification. 3 disordered regions span residues 768–840, 852–902, and 915–1046; these read QSSS…EQDS, YPSL…GTRV, and KLAQ…KQRL. 2 stretches are compositionally biased toward low complexity: residues 769-778 and 785-804; these read SSSSSPATSS and GGQD…VSNS. S804, S826, S834, S854, S857, and S880 each carry phosphoserine. Acidic residues predominate over residues 826–839; that stretch reads SEEEEENASLDEQD. A compositionally biased stretch (basic and acidic residues) spans 891–900; sequence KQDRPVREGT. Basic residues predominate over residues 924–934; the sequence is AQKKKYIKKKP. Over residues 1018 to 1030 the composition is skewed to polar residues; it reads RRPSVGSQSNQAG.

The protein belongs to the JHDM1 histone demethylase family. JHDM1D subfamily. As to quaternary structure, interacts with POLR1B, UBTF, SETD1A, HCFC1, E2F1 and ZNF711. Interacts with ZNF263; recruited to the SIX3 promoter along with other proteins involved in chromatin modification and transcriptional corepression where it contributes to transcriptional repression. Fe(2+) serves as cofactor. In terms of processing, phosphorylation at Ser-69 and Ser-120 are required for dissociation from chromatin and accumulation of H4K20Me1 levels during prophase.

Its subcellular location is the nucleus. It localises to the nucleolus. The catalysed reaction is N(6),N(6)-dimethyl-L-lysyl(36)-[histone H3] + 2 2-oxoglutarate + 2 O2 = L-lysyl(36)-[histone H3] + 2 formaldehyde + 2 succinate + 2 CO2. The enzyme catalyses N(6),N(6)-dimethyl-L-lysyl(9)-[histone H3] + 2 2-oxoglutarate + 2 O2 = L-lysyl(9)-[histone H3] + 2 formaldehyde + 2 succinate + 2 CO2. Its function is as follows. Histone lysine demethylase with selectivity for the di- and monomethyl states that plays a key role cell cycle progression, rDNA transcription and brain development. Demethylates mono- and dimethylated histone H3 'Lys-9' residue (H3K9Me1 and H3K9Me2), dimethylated H3 'Lys-27' (H3K27Me2) and monomethylated histone H4 'Lys-20' residue (H4K20Me1). Acts as a transcription activator as H3K9Me1, H3K9Me2, H3K27Me2 and H4K20Me1 are epigenetic repressive marks. Involved in cell cycle progression by being required to control G1-S transition. Acts as a coactivator of rDNA transcription, by activating polymerase I (pol I) mediated transcription of rRNA genes. Required for brain development, probably by regulating expression of neuron-specific genes. Only has activity toward H4K20Me1 when nucleosome is used as a substrate and when not histone octamer is used as substrate. May also have weak activity toward dimethylated H3 'Lys-36' (H3K36Me2), however, the relevance of this result remains unsure in vivo. Specifically binds trimethylated 'Lys-4' of histone H3 (H3K4me3), affecting histone demethylase specificity: has weak activity toward H3K9Me2 in absence of H3K4me3, while it has high activity toward H3K9me2 when binding H3K4me3. Positively modulates transcription of histone demethylase KDM5C, acting synergistically with transcription factor ARX; synergy may be related to enrichment of histone H3K4me3 in regulatory elements. The protein is Histone lysine demethylase PHF8 (PHF8) of Homo sapiens (Human).